The primary structure comprises 561 residues: Lanosterol 14-alpha demethylase (561 aa).

Cysteine 501 lines the heme pocket.

It belongs to the cytochrome P450 family. Heme serves as cofactor.

It localises to the membrane. The enzyme catalyses a 14alpha-methyl steroid + 3 reduced [NADPH--hemoprotein reductase] + 3 O2 = a Delta(14) steroid + formate + 3 oxidized [NADPH--hemoprotein reductase] + 4 H2O + 4 H(+). The catalysed reaction is a 14alpha-methyl steroid + reduced [NADPH--hemoprotein reductase] + O2 = a 14alpha-hydroxymethyl steroid + oxidized [NADPH--hemoprotein reductase] + H2O + H(+). It catalyses the reaction a 14alpha-hydroxymethyl steroid + reduced [NADPH--hemoprotein reductase] + O2 = a 14alpha-formyl steroid + oxidized [NADPH--hemoprotein reductase] + 2 H2O + H(+). It carries out the reaction a 14alpha-formyl steroid + reduced [NADPH--hemoprotein reductase] + O2 = a Delta(14) steroid + formate + oxidized [NADPH--hemoprotein reductase] + H2O + 2 H(+). The enzyme catalyses lanosterol + 3 reduced [NADPH--hemoprotein reductase] + 3 O2 = 4,4-dimethyl-5alpha-cholesta-8,14,24-trien-3beta-ol + formate + 3 oxidized [NADPH--hemoprotein reductase] + 4 H2O + 4 H(+). The catalysed reaction is lanosterol + reduced [NADPH--hemoprotein reductase] + O2 = 32-hydroxylanosterol + oxidized [NADPH--hemoprotein reductase] + H2O + H(+). It catalyses the reaction 32-hydroxylanosterol + reduced [NADPH--hemoprotein reductase] + O2 = 32-oxolanosterol + oxidized [NADPH--hemoprotein reductase] + 2 H2O + H(+). It carries out the reaction 32-oxolanosterol + reduced [NADPH--hemoprotein reductase] + O2 = 4,4-dimethyl-5alpha-cholesta-8,14,24-trien-3beta-ol + formate + oxidized [NADPH--hemoprotein reductase] + H2O + 2 H(+). The enzyme catalyses eburicol + 3 reduced [NADPH--hemoprotein reductase] + 3 O2 = 14-demethyleburicol + formate + 3 oxidized [NADPH--hemoprotein reductase] + 4 H2O + 4 H(+). The catalysed reaction is eburicol + reduced [NADPH--hemoprotein reductase] + O2 = 32-hydroxyeburicol + oxidized [NADPH--hemoprotein reductase] + H2O + H(+). It catalyses the reaction 32-hydroxyeburicol + reduced [NADPH--hemoprotein reductase] + O2 = 32-oxoeburicol + oxidized [NADPH--hemoprotein reductase] + 2 H2O + H(+). It carries out the reaction 32-oxoeburicol + reduced [NADPH--hemoprotein reductase] + O2 = 14-demethyleburicol + formate + oxidized [NADPH--hemoprotein reductase] + H2O + 2 H(+). It functions in the pathway steroid biosynthesis; zymosterol biosynthesis; zymosterol from lanosterol: step 1/6. Functionally, sterol 14alpha-demethylase that plays a critical role in the third module of ergosterol biosynthesis pathway, being ergosterol the major sterol component in fungal membranes that participates in a variety of functions. The third module or late pathway involves the ergosterol synthesis itself through consecutive reactions that mainly occur in the endoplasmic reticulum (ER) membrane. In filamentous fungi, during the initial step of this module, lanosterol (lanosta-8,24-dien-3beta-ol) can be metabolized to eburicol. Sterol 14alpha-demethylase catalyzes the three-step oxidative removal of the 14alpha-methyl group (C-32) of both these sterols in the form of formate, and converts eburicol and lanosterol to 14-demethyleburicol (4,4,24-trimethylergosta-8,14,24(28)-trienol) and 4,4-dimethyl-5alpha-cholesta-8,14,24-trien-3beta-ol, respectively, which are further metabolized by other enzymes in the pathway to ergosterol. Can also use substrates not intrinsic to fungi, such as 24,25-dihydrolanosterol (DHL), producing 4,4-dimethyl-8,14-cholestadien-3-beta-ol, but at lower rates than the endogenous substrates. This chain is Lanosterol 14-alpha demethylase (ERG11), found in Mycosarcoma maydis (Corn smut fungus).